Consider the following 510-residue polypeptide: Fumarate hydratase, mitochondrial (510 aa).

A mitochondrion-targeting transit peptide spans 1–44; it reads MYRALWLLARSRRLVRPPASALASAPGLSGAAVPSFWPPNAARM. Residues Lys61, Lys66, and Lys80 each carry the N6-acetyllysine; alternate modification. 3 positions are modified to N6-succinyllysine; alternate: Lys61, Lys66, and Lys80. Residues Thr85 and Thr90 each carry the phosphothreonine modification. Lys94 is subject to N6-acetyllysine. 2 positions are modified to N6-acetyllysine; alternate: Lys115 and Lys122. 2 positions are modified to N6-succinyllysine; alternate: Lys115 and Lys122. Residues 145–147, 176–179, and 186–188 contribute to the substrate site; these read SGT, HPND, and SSN. Position 213 is an N6-acetyllysine (Lys213). Lys223 carries the N6-acetyllysine; alternate modification. Lys223 carries the N6-succinyllysine; alternate modification. Thr234 is a binding site for substrate. His235 serves as the catalytic Proton donor/acceptor. Thr236 is subject to Phosphothreonine. At Lys256 the chain carries N6-acetyllysine. Lys292 is subject to N6-acetyllysine; alternate. Lys292 carries the N6-succinyllysine; alternate modification. Residue Ser365 is part of the active site. Residues Ser366 and 371–373 each bind substrate; that span reads KVN. Residue Ser366 is modified to Phosphoserine. 2 positions are modified to N6-succinyllysine: Lys467 and Lys473. An N6-acetyllysine modification is found at Lys502.

This sequence belongs to the class-II fumarase/aspartase family. Fumarase subfamily. Homotetramer. Interacts with H2AZ1. Post-translationally, phosphorylation at Thr-236 by PRKDC in response to DNA damage promotes translocation to the nucleus and recruitment to DNA double-strand breaks (DSBs).

It is found in the mitochondrion. The protein localises to the cytoplasm. Its subcellular location is the cytosol. It localises to the nucleus. The protein resides in the chromosome. It carries out the reaction (S)-malate = fumarate + H2O. Its pathway is carbohydrate metabolism; tricarboxylic acid cycle; (S)-malate from fumarate: step 1/1. Its function is as follows. Catalyzes the reversible stereospecific interconversion of fumarate to L-malate. Experiments in other species have demonstrated that specific isoforms of this protein act in defined pathways and favor one direction over the other. In terms of biological role, catalyzes the hydration of fumarate to L-malate in the tricarboxylic acid (TCA) cycle to facilitate a transition step in the production of energy in the form of NADH. Functionally, catalyzes the dehydration of L-malate to fumarate. Fumarate metabolism in the cytosol plays a role during urea cycle and arginine metabolism; fumarate being a by-product of the urea cycle and amino-acid catabolism. Also plays a role in DNA repair by promoting non-homologous end-joining (NHEJ). In response to DNA damage and phosphorylation by PRKDC, translocates to the nucleus and accumulates at DNA double-strand breaks (DSBs): acts by catalyzing formation of fumarate, an inhibitor of KDM2B histone demethylase activity, resulting in enhanced dimethylation of histone H3 'Lys-36' (H3K36me2). The protein is Fumarate hydratase, mitochondrial of Macaca fascicularis (Crab-eating macaque).